The sequence spans 500 residues: Probable cytosol aminopeptidase (500 aa).

Lys-264 and Asp-269 together coordinate Mn(2+). Lys-276 is an active-site residue. Mn(2+) is bound by residues Asp-287, Asp-346, and Glu-348. Residue Arg-350 is part of the active site.

This sequence belongs to the peptidase M17 family. Mn(2+) serves as cofactor.

The protein localises to the cytoplasm. The catalysed reaction is Release of an N-terminal amino acid, Xaa-|-Yaa-, in which Xaa is preferably Leu, but may be other amino acids including Pro although not Arg or Lys, and Yaa may be Pro. Amino acid amides and methyl esters are also readily hydrolyzed, but rates on arylamides are exceedingly low.. It carries out the reaction Release of an N-terminal amino acid, preferentially leucine, but not glutamic or aspartic acids.. Presumably involved in the processing and regular turnover of intracellular proteins. Catalyzes the removal of unsubstituted N-terminal amino acids from various peptides. In Nitrobacter hamburgensis (strain DSM 10229 / NCIMB 13809 / X14), this protein is Probable cytosol aminopeptidase.